A 381-amino-acid chain; its full sequence is MKRKAVLEAFSDSEDEDEKKLKGPQLITGFSAEEGVHYQNETIQRIHEKKRAPKIIHIASDENWMEKRKARFKKKETEVHEKPSQLPDSGLNYGLNIRVASSSAADNEIVDWKANNSNEKAQNKIATNKESTDILPEEVQLVLNDLNDDVKSANSANLQPITTNVVNEKDAYRKDIDELPEPSNMKDYSEIPVEEFGAAMLRGMGWNGQLSSKDAFDVNQRPTFLGMGAKPVDSELTELDIWKNPKKTMFLPVKPLESNSALNSQNEHTEVQKKSNSIDNLTPSSELFRKRSRDNNLSRESSVSSKHLDYNSRNYNKRDRDPDRTKYREYHSERRKQHRTDRYSDDYYQGRSYSYKKRSHRSDRYTERENPDRSYRSTRTL.

The disordered stretch occupies residues 1–21 (MKRKAVLEAFSDSEDEDEKKL). S11 and S13 each carry phosphoserine. Positions 104-157 (AADNEIVDWKANNSNEKAQNKIATNKESTDILPEEVQLVLNDLNDDVKSANSAN) form a coiled coil. A disordered region spans residues 262–381 (LNSQNEHTEV…DRSYRSTRTL (120 aa)). A compositionally biased stretch (polar residues) spans 274–285 (KSNSIDNLTPSS). Phosphoserine occurs at positions 275 and 277. Basic and acidic residues-rich tracts occupy residues 287–297 (LFRKRSRDNNL), 306–332 (KHLD…EYHS), and 362–375 (SDRY…DRSY).

This sequence belongs to the SPP2 family. As to quaternary structure, belongs to the 40S cdc5-associated complex (or cwf complex), a spliceosome sub-complex reminiscent of a late-stage spliceosome composed of the U2, U5 and U6 snRNAs and at least brr2, cdc5, cwf2/prp3, cwf3/syf1, cwf4/syf3, cwf5/ecm2, spp42/cwf6, cwf7/spf27, cwf8, cwf9, cwf10, cwf11, cwf12, prp45/cwf13, cwf14, cwf15, cwf16, cwf17, cwf18, cwf19, cwf20, cwf21, cwf22, cwf23, cwf24, cwf25, cwf26, cyp7/cwf27, cwf28, cwf29/ist3, lea1, msl1, prp5/cwf1, prp10, prp12/sap130, prp17, prp22, sap61, sap62, sap114, sap145, slu7, smb1, smd1, smd3, smf1, smg1 and syf2.

The protein localises to the nucleus. Functionally, involved in spliceosome maturation and the first step of pre-mRNA splicing. In Schizosaccharomyces pombe (strain 972 / ATCC 24843) (Fission yeast), this protein is Pre-mRNA-splicing factor cwf28 (cwf28).